A 214-amino-acid polypeptide reads, in one-letter code: Cytochrome c biogenesis ATP-binding export protein CcmA (214 aa).

In terms of domain architecture, ABC transporter spans 12 to 214; that stretch reads LAAHALAFSR…TRMLTLEAAA (203 aa). 44-51 contacts ATP; sequence GDNGAGKT.

It belongs to the ABC transporter superfamily. CcmA exporter (TC 3.A.1.107) family. The complex is composed of two ATP-binding proteins (CcmA) and two transmembrane proteins (CcmB).

It localises to the cell inner membrane. The enzyme catalyses heme b(in) + ATP + H2O = heme b(out) + ADP + phosphate + H(+). In terms of biological role, part of the ABC transporter complex CcmAB involved in the biogenesis of c-type cytochromes; once thought to export heme, this seems not to be the case, but its exact role is uncertain. Responsible for energy coupling to the transport system. This Xanthomonas oryzae pv. oryzae (strain MAFF 311018) protein is Cytochrome c biogenesis ATP-binding export protein CcmA.